The following is an 868-amino-acid chain: Ionotropic receptor 93a (868 aa).

An N-terminal signal peptide occupies residues 1 to 28 (MNPGEMRPSACLLLLAGLQLSILVPTEA). Topologically, residues 29 to 565 (NDFSSFLSAN…ITRKPDEVSR (537 aa)) are extracellular. Residues N38, N205, N294, N305, N432, N475, N499, and N543 are each glycosylated (N-linked (GlcNAc...) asparagine). Residues 566–586 (IYLFTAPFTVETWFCLMGIIL) form a helical membrane-spanning segment. The Cytoplasmic segment spans residues 587 to 642 (LTAPTLYAINRLAPLKEMRIVGLSTVKSCFWYIFGALLQQGGMYLPTADSGRLVVG). Residues 643-663 (FWWIVVIVLVTTYCGNLVAFL) form a helical membrane-spanning segment. At 664-832 (TFPKFQPGVD…HKVNMDDMQG (169 aa)) the chain is on the extracellular side. N-linked (GlcNAc...) asparagine glycosylation occurs at N691. Residues 833-853 (CFLVLLLGFTLALLIVCGEFW) form a helical membrane-spanning segment. Over 854–868 (YRRFRASRKRRQFTN) the chain is Cytoplasmic.

This sequence belongs to the glutamate-gated ion channel (TC 1.A.10.1) family. In terms of tissue distribution, in the antenna, detected in sacculus neurons which innervate the first and second chambers (at protein level). Expressed in multiple cells of the larval dorsal organ ganglion, including the dorsal organ cool cells where it is predominately localized to the dendritic bulbs (at protein level).

The protein localises to the cell membrane. Functionally, integral part of various neural sensory systems in the antenna that provide the neural basis for the response to environmental changes in temperature (thermosensation) and humidity (hygrosensation). Together with Ir21a and Ir25a, mediates the response of the larval dorsal organ cool cells, a trio of cool-responsive neurons, to cooling and is required for cool avoidance behavior. Together with Ir25a and Ir40a, mediates the response of the hydrosensory sacculus neurons to changes in relative humidity, and is required for dry detection and humidiy preference behavior. The chain is Ionotropic receptor 93a from Drosophila melanogaster (Fruit fly).